We begin with the raw amino-acid sequence, 198 residues long: Coagulation factor XIII A chain (198 aa).

Residues 1–36 form a disordered region; that stretch reads MSESSGTAFGGRRAIPPNTSNAAENDPPTVELQGLV. S2 is subject to N-acetylserine. The propeptide at 2–38 is activation peptide; sequence SESSGTAFGGRRAIPPNTSNAAENDPPTVELQGLVPR.

This sequence belongs to the transglutaminase superfamily. Transglutaminase family. Tetramer of two A chains (F13A1) and two B (F13B) chains. It depends on Ca(2+) as a cofactor. Post-translationally, the activation peptide is released by thrombin.

The protein localises to the cytoplasm. Its subcellular location is the secreted. The enzyme catalyses L-glutaminyl-[protein] + L-lysyl-[protein] = [protein]-L-lysyl-N(6)-5-L-glutamyl-[protein] + NH4(+). Factor XIII is activated by thrombin and calcium ion to a transglutaminase that catalyzes the formation of gamma-glutamyl-epsilon-lysine cross-links between fibrin chains, thus stabilizing the fibrin clot. Also cross-link alpha-2-plasmin inhibitor, or fibronectin, to the alpha chains of fibrin. The chain is Coagulation factor XIII A chain (F13A1) from Bos taurus (Bovine).